Reading from the N-terminus, the 106-residue chain is Large ribosomal subunit protein eL42 (106 aa).

The segment at 37–56 (SQGKRRYDRKQSGYGGQTKP) is disordered.

The protein belongs to the eukaryotic ribosomal protein eL42 family.

The polypeptide is Large ribosomal subunit protein eL42 (RPL44) (Pichia kudriavzevii (Yeast)).